Consider the following 174-residue polypeptide: MQGIDVSYSDEVGFLTKGDRDWEDWIMQLLLMAKKEIGKDNAQEMSINFVDEDRSQAINRDYRDKDRPTDVISFAIEDGDDGLDLAMFTQDPDFTEDIGDLFMCPSVIERHSKEYGTGFDREFGYTIVHGYLHLNCYDHIEPDEAKEMFGIQGKVLEEYGLPLYPDQLDEGRGK.

Positions 129, 133, and 139 each coordinate Zn(2+).

It belongs to the endoribonuclease YbeY family. Requires Zn(2+) as cofactor.

It localises to the cytoplasm. Its function is as follows. Single strand-specific metallo-endoribonuclease involved in late-stage 70S ribosome quality control and in maturation of the 3' terminus of the 16S rRNA. This Lactobacillus delbrueckii subsp. bulgaricus (strain ATCC BAA-365 / Lb-18) protein is Endoribonuclease YbeY.